The sequence spans 946 residues: Protein TMA108 (946 aa).

Ser2 carries the N-acetylserine modification. Met293–Asn297 serves as a coordination point for substrate. A Zn(2+)-binding site is contributed by His330. Residue Glu331 is the Proton acceptor of the active site. Residues His334 and Glu353 each contribute to the Zn(2+) site.

This sequence belongs to the peptidase M1 family. In terms of assembly, associates with ribosomal complexes. Zn(2+) is required as a cofactor.

The protein resides in the cytoplasm. Functionally, putative zinc aminopeptidase which may be involved in ribosome biogenesis. The protein is Protein TMA108 (TMA108) of Saccharomyces cerevisiae (strain ATCC 204508 / S288c) (Baker's yeast).